The following is a 238-amino-acid chain: Type III pantothenate kinase (238 aa).

7 to 14 (DAGNSGLK) is a binding site for ATP. Residues tyrosine 88 and 95 to 98 (GVDR) contribute to the substrate site. Aspartate 97 (proton acceptor) is an active-site residue. Aspartate 117 lines the K(+) pocket. Threonine 120 provides a ligand contact to ATP. Residue threonine 172 coordinates substrate.

Belongs to the type III pantothenate kinase family. Homodimer. The cofactor is NH4(+). K(+) is required as a cofactor.

It is found in the cytoplasm. It catalyses the reaction (R)-pantothenate + ATP = (R)-4'-phosphopantothenate + ADP + H(+). It participates in cofactor biosynthesis; coenzyme A biosynthesis; CoA from (R)-pantothenate: step 1/5. In terms of biological role, catalyzes the phosphorylation of pantothenate (Pan), the first step in CoA biosynthesis. The polypeptide is Type III pantothenate kinase (Hahella chejuensis (strain KCTC 2396)).